Reading from the N-terminus, the 144-residue chain is Superoxide dismutase [Mn], mitochondrial (144 aa).

Residues histidine 10, histidine 58, and aspartate 143 each coordinate Mn(2+).

This sequence belongs to the iron/manganese superoxide dismutase family. In terms of assembly, homotetramer. The cofactor is Mn(2+).

The protein localises to the mitochondrion matrix. The enzyme catalyses 2 superoxide + 2 H(+) = H2O2 + O2. Functionally, destroys superoxide anion radicals which are normally produced within the cells and which are toxic to biological systems. This chain is Superoxide dismutase [Mn], mitochondrial, found in Petromyzon marinus (Sea lamprey).